Consider the following 327-residue polypeptide: Germination protease (327 aa).

Positions 1–7 (MNSVRTD) are excised as a propeptide.

This sequence belongs to the peptidase A25 family. Homotetramer. Post-translationally, autoproteolytically processed. The inactive tetrameric zymogen termed p46 autoprocesses to a smaller form termed p41, which is active only during spore germination.

The catalysed reaction is Endopeptidase action with P4 Glu or Asp, P1 preferably Glu &gt; Asp, P1' hydrophobic and P2' Ala.. In terms of biological role, initiates the rapid degradation of small, acid-soluble proteins during spore germination. In Clostridium acetobutylicum (strain ATCC 824 / DSM 792 / JCM 1419 / IAM 19013 / LMG 5710 / NBRC 13948 / NRRL B-527 / VKM B-1787 / 2291 / W), this protein is Germination protease.